We begin with the raw amino-acid sequence, 390 residues long: uncharacterized protein (390 aa).

The next 11 helical transmembrane spans lie at 7 to 27 (IYILAIVSFLVGTSEYIISGI), 35 to 55 (LGITLAAAGQLITIFSLVYAL), 77 to 97 (LGLFVFGNVLAFVLPGYGWFI), 101 to 121 (IIMAMGAGVVVVTALTIAAKI), 128 to 148 (GSAIATVVMGFTASLIIGVPL), 161 to 181 (VFGAIALLGLIAMVVIFFTLP), 203 to 223 (VAMGLSITFFWLGGYSVAYTY), 238 to 258 (LLSGVLLIFGIASLVGSKFGG), 281 to 301 (LILLSLVTHSYIGVLVILILW), 335 to 355 (MQFAMAVGAGIGGVFVENVSL), and 357 to 377 (SITWVGALGVMIAIIASLLIF).

Belongs to the major facilitator superfamily.

The protein localises to the cell membrane. This is an uncharacterized protein from Bacillus subtilis (strain 168).